The chain runs to 223 residues: MNIAKLIDHTILKPNSTKEDVMKVIEEAKQYKFASVCINPTWVKLAAEELAGHDVDVCTVIGFPLGASTTETKAFETKDAIAKGATEVDMVINVGALKDGDNEFVEKDIYEVVQAAKGKALVKVIIETCLLTDEEKVRACELSVKAGADFVKTSTGFSTGGATAEDIALMRKTVGPNVGVKASGGVRTREDADKMVEAGASRVGASASVAIVLNDAKGATDNY.

Catalysis depends on D89, which acts as the Proton donor/acceptor. K152 (schiff-base intermediate with acetaldehyde) is an active-site residue. Catalysis depends on K181, which acts as the Proton donor/acceptor.

This sequence belongs to the DeoC/FbaB aldolase family. DeoC type 1 subfamily.

It localises to the cytoplasm. It carries out the reaction 2-deoxy-D-ribose 5-phosphate = D-glyceraldehyde 3-phosphate + acetaldehyde. It participates in carbohydrate degradation; 2-deoxy-D-ribose 1-phosphate degradation; D-glyceraldehyde 3-phosphate and acetaldehyde from 2-deoxy-alpha-D-ribose 1-phosphate: step 2/2. Its function is as follows. Catalyzes a reversible aldol reaction between acetaldehyde and D-glyceraldehyde 3-phosphate to generate 2-deoxy-D-ribose 5-phosphate. The sequence is that of Deoxyribose-phosphate aldolase from Bacillus mycoides (strain KBAB4) (Bacillus weihenstephanensis).